A 223-amino-acid chain; its full sequence is Ubiquitin carboxyl-terminal hydrolase isozyme L1 (223 aa).

Residue methionine 1 is modified to N-acetylmethionine. The UCH catalytic domain maps to 2–221 (QLKPMEINPE…VRFSAVALCK (220 aa)). Residues 5 to 10 (PMEINP) are interaction with ubiquitin. Cysteine 90 acts as the Nucleophile in catalysis. A Phosphoserine modification is found at serine 125. Histidine 161 (proton donor) is an active-site residue. Residues 211-216 (EVRFSA) form an interaction with ubiquitin region. A lipid anchor (S-farnesyl cysteine) is attached at cysteine 220. Positions 221–223 (KAA) are cleaved as a propeptide — removed in mature form.

The protein belongs to the peptidase C12 family. Monomer. Homodimer. Interacts with COPS5 and SNCA. In terms of processing, O-glycosylated.

The protein localises to the cytoplasm. It localises to the endoplasmic reticulum membrane. It catalyses the reaction Thiol-dependent hydrolysis of ester, thioester, amide, peptide and isopeptide bonds formed by the C-terminal Gly of ubiquitin (a 76-residue protein attached to proteins as an intracellular targeting signal).. Functionally, ubiquitin-protein hydrolase involved both in the processing of ubiquitin precursors and of ubiquitinated proteins. This enzyme is a thiol protease that recognizes and hydrolyzes a peptide bond at the C-terminal glycine of ubiquitin. Also binds to free monoubiquitin and may prevent its degradation in lysosomes. The homodimer may have ATP-independent ubiquitin ligase activity. The chain is Ubiquitin carboxyl-terminal hydrolase isozyme L1 (UCHL1) from Sus scrofa (Pig).